The sequence spans 185 residues: Elongation factor P (185 aa).

The protein belongs to the elongation factor P family.

The protein resides in the cytoplasm. It functions in the pathway protein biosynthesis; polypeptide chain elongation. Its function is as follows. Involved in peptide bond synthesis. Stimulates efficient translation and peptide-bond synthesis on native or reconstituted 70S ribosomes in vitro. Probably functions indirectly by altering the affinity of the ribosome for aminoacyl-tRNA, thus increasing their reactivity as acceptors for peptidyl transferase. This Paraburkholderia phymatum (strain DSM 17167 / CIP 108236 / LMG 21445 / STM815) (Burkholderia phymatum) protein is Elongation factor P.